The following is a 397-amino-acid chain: 4-O-methyl-glucuronoyl methylesterase (397 aa).

The first 18 residues, 1–18 (MVHLTSALLVAGAAFAAA), serve as a signal peptide directing secretion. 3 disulfides stabilise this stretch: Cys31-Cys65, Cys212-Cys347, and Cys244-Cys319. The GXSYXG catalytic site motif signature appears at 211–216 (GCSRNG). Ser213 acts as the Nucleophile in catalysis. Substrate contacts are provided by Lys217, Gln259, Glu267, and Trp310. His346 functions as the Proton donor/acceptor in the catalytic mechanism.

The protein belongs to the carbohydrate esterase 15 (CE15) family.

It localises to the secreted. The enzyme catalyses a 4-O-methyl-alpha-D-glucuronosyl ester derivative + H2O = 4-O-methyl-alpha-D-glucuronate derivative + an alcohol + H(+). Its function is as follows. Glucuronoyl esterase which may play a significant role in biomass degradation, as it is considered to disconnect hemicellulose from lignin through the hydrolysis of the ester bond between 4-O-methyl-D-glucuronic acid residues of glucuronoxylans and aromatic alcohols of lignin. In Thermothelomyces thermophilus (strain ATCC 42464 / BCRC 31852 / DSM 1799) (Sporotrichum thermophile), this protein is 4-O-methyl-glucuronoyl methylesterase (ge2).